Consider the following 206-residue polypeptide: Ubiquitin-conjugating enzyme E2 S (206 aa).

In terms of domain architecture, UBC core spans 14–160 (QTIRQVMKEL…ARMMTEIHAQ (147 aa)). The active-site Glycyl thioester intermediate is the cysteine 98. Residues 165–191 (GVSDAKDDDGPSNKKHAGLDKKLQDKK) form a disordered region. The span at 168–191 (DAKDDDGPSNKKHAGLDKKLQDKK) shows a compositional bias: basic and acidic residues.

It belongs to the ubiquitin-conjugating enzyme family.

It carries out the reaction S-ubiquitinyl-[E1 ubiquitin-activating enzyme]-L-cysteine + [E2 ubiquitin-conjugating enzyme]-L-cysteine = [E1 ubiquitin-activating enzyme]-L-cysteine + S-ubiquitinyl-[E2 ubiquitin-conjugating enzyme]-L-cysteine.. It participates in protein modification; protein ubiquitination. Catalyzes the covalent attachment of ubiquitin to other proteins. Acts as an essential factor of the anaphase promoting complex/cyclosome (APC/C), a cell cycle-regulated ubiquitin ligase that controls progression through mitosis. Acts by specifically elongating polyubiquitin chains initiated by the E2 enzyme vih/UbcH10 on APC/C substrates, enhancing the degradation of APC/C substrates by the proteasome and promoting mitotic exit. The protein is Ubiquitin-conjugating enzyme E2 S of Drosophila mojavensis (Fruit fly).